Reading from the N-terminus, the 122-residue chain is Crustacean hyperglycemic hormones 5 (122 aa).

The N-terminal stretch at 1 to 26 is a signal peptide; it reads MSLGLIASRLVAVALVVVVACSTTWA. Cystine bridges form between Cys-55-Cys-91, Cys-71-Cys-87, and Cys-74-Cys-100. Position 120 is a valine amide (Val-120).

It belongs to the arthropod CHH/MIH/GIH/VIH hormone family.

It localises to the secreted. Hormone found in the sinus gland of isopods and decapods which controls the blood sugar level. Has a secretagogue action over the amylase released from the midgut gland. May act as a stress hormone and may be involved in the control of molting and reproduction. This chain is Crustacean hyperglycemic hormones 5 (CHH5), found in Penaeus monodon (Giant tiger prawn).